Consider the following 214-residue polypeptide: Adenylate kinase (214 aa).

10 to 15 (GAGKGT) is a binding site for ATP. Residues 30–59 (STGDMLRAAVKAGTPLGLEAKKVMDAGQLV) form an NMP region. Residues Thr-31, Arg-36, 57–59 (QLV), 85–88 (GFPR), and Gln-92 contribute to the AMP site. Residues 122 to 159 (GRRVHPGSGRVYHVVFNPPKVEGKDDVTGEDLVIRPDD) are LID. ATP contacts are provided by residues Arg-123 and 132–133 (VY). AMP contacts are provided by Arg-156 and Arg-167. Gln-200 contacts ATP.

Belongs to the adenylate kinase family. Monomer.

It localises to the cytoplasm. The enzyme catalyses AMP + ATP = 2 ADP. The protein operates within purine metabolism; AMP biosynthesis via salvage pathway; AMP from ADP: step 1/1. In terms of biological role, catalyzes the reversible transfer of the terminal phosphate group between ATP and AMP. Plays an important role in cellular energy homeostasis and in adenine nucleotide metabolism. The chain is Adenylate kinase from Shewanella amazonensis (strain ATCC BAA-1098 / SB2B).